The sequence spans 499 residues: Zinc finger protein PLAG1 (499 aa).

A disordered region spans residues 1-33; sequence MATVIPGDLSEVRDTQKAPSGKRKRGESKPRKN. The interaction with KPNA2 stretch occupies residues 2 to 84; sequence ATVIPGDLSE…SKYKLQRHMA (83 aa). Residues 22-25 carry the Nuclear localization signal motif; it reads KRKR. 7 consecutive C2H2-type zinc fingers follow at residues 34 to 56, 62 to 86, 92 to 114, 121 to 143, 150 to 172, 185 to 207, and 213 to 236; these read FPCQLCDKAFNSVEKLKVHSFSH, YKCTHQDCTKAFVSKYKLQRHMATH, HKCNYCEKMFHRKDHLKNHLHTH, FKCEECGKSYNTKLGFKRHLALH, LTCKVCLQNFESTGVLLEHLKSH, HQCEHCERRFYTRKDVRRHMVVH, and FLCQYCAQRFGRKDHLTRHMKKSH. A decreased nuclear import with localization in the nucleus but also in the cytoplasm region spans residues 41-242; sequence KAFNSVEKLK…KKSHNQELLK (202 aa). Residues 243–383 form a repression domain; contains 3 sumoylation motifs and massively decrease transcription activity region; sequence VKTEPVDFLD…SPASSSKLGL (141 aa). The tract at residues 243-499 is activates transcription; Inhibition of nuclear import due to lack of NLS and KPNA2 interaction; sequence VKTEPVDFLD…TLPRFHQAFQ (257 aa). Residues Lys244 and Lys263 each participate in a glycyl lysine isopeptide (Lys-Gly) (interchain with G-Cter in SUMO) cross-link. A compositionally biased stretch (low complexity) spans 365-379; sequence GGAPSSSQDSPASSS. A disordered region spans residues 365-400; sequence GGAPSSSQDSPASSSKLGLEPQSGSPDDGAGDLSLS. Residues 384–499 form a massively activates transcription region; sequence EPQSGSPDDG…TLPRFHQAFQ (116 aa).

This sequence belongs to the krueppel C2H2-type zinc-finger protein family. Interacts with KPNA2, which escorts protein to the nucleus via interaction with nuclear localization signal. Interacts with E3 SUMO-protein ligase PIAS1, PIAS2 and PIAS4. In terms of processing, sumoylated with SUMO1; which inhibits transcriptional activity, but does not affect nuclear localization. Blockers of sumoylation pathway such as SENP3 and inactive UBE2I increases transcriptional capacity. Sumoylation is increased in the presence of PIAS1. Acetylated by lysine acetyltransferase EP300; which activates transcriptional capacity. Lysine residues that are sumoylated also seem to be target for acetylation. Expressed in heart, spleen, lung, kidney, brain, testis and epididymis but not in salivary glands.

It is found in the nucleus. Functionally, transcription factor whose activation results in up-regulation of target genes, such as IGFII, leading to uncontrolled cell proliferation: when overexpressed in cultured cells, higher proliferation rate and transformation are observed. Other target genes such as CRLF1, CRABP2, CRIP2, PIGF are strongly induced in cells with PLAG1 induction. Proto-oncogene whose ectopic expression can trigger the development of pleomorphic adenomas of the salivary gland and lipoblastomas. Cooperates with CBFB-MYH11. This is Zinc finger protein PLAG1 (Plag1) from Mus musculus (Mouse).